The following is a 329-amino-acid chain: BTB/POZ domain-containing adapter for CUL3-mediated RhoA degradation protein 1 (329 aa).

Residues 1–31 (MSAEASGPAPAAAECLESPSPSSVEPGSPSY) form a disordered region. Residues 41-109 (KYVKLNVGGS…LRDGSVPLPE (69 aa)) form the BTB domain.

This sequence belongs to the BACURD family. Homotetramer; forms a two-fold symmetric tetramer in solution. Interacts with CUL3; interaction is direct and forms a 5:5 heterodecamer. Component of the BCR(KCTD13) E3 ubiquitin ligase complex, at least composed of CUL3, KCTD13/BACURD1 and RBX1. Interacts with RHOA; with a preference for RhoA-GDP. Interacts with POLD2 and PCNA. Interacts with SPRTN.

The protein localises to the nucleus. It participates in protein modification; protein ubiquitination. Its function is as follows. Substrate-specific adapter of a BCR (BTB-CUL3-RBX1) E3 ubiquitin-protein ligase complex required for synaptic transmission. The BCR(KCTD13) E3 ubiquitin ligase complex mediates the ubiquitination of RHOA, leading to its degradation by the proteasome, thereby regulating the actin cytoskeleton and promoting synaptic transmission. This Mus musculus (Mouse) protein is BTB/POZ domain-containing adapter for CUL3-mediated RhoA degradation protein 1 (Kctd13).